Consider the following 222-residue polypeptide: Latexin (222 aa).

Residues 1–97 (MEIPPTHYAA…NFTFEGEIGK (97 aa)) enclose the Cystatin LXN-type 1 domain. K55 is subject to N6-acetyllysine. The segment at 98 to 117 (NPDEEDNTFYQSLMSLKRPL) is alpha-helical linker. In terms of domain architecture, Cystatin LXN-type 2 spans 118 to 222 (EAQDIPDNFG…SRLPKEGQAE (105 aa)).

Belongs to the protease inhibitor I47 (latexin) family. Highly enriched in macrophages.

Its subcellular location is the cytoplasm. Hardly reversible, non-competitive, and potent inhibitor of CPA1, CPA2 and CPA4. May play a role in inflammation. This chain is Latexin (Lxn), found in Mus musculus (Mouse).